Consider the following 1337-residue polypeptide: MPSLQLLQLTERGRGLVASRRKSILLAAGIVAAGGTAVYLKSRVASRRPDSSRLCNGQSDDDETLEKLTATDQNAKITTKKKKGGGLKSLQVLTAILLSQMGKMGARDLLALVATVVFRTALSNRLAKVQGFLFRAAFLRRAPLFLRLISENIMLCFMLSTLHSTSKYITGALSLRFRKILTKIIHSHYFENMVYYKISHVDGRITHPEQRIASDVPRFSSELSDLILDDLTAVTDGILYAWRLCSYASPKYIFWILAYVLGAGTAIRNFSPSFGKLMSKEQQLEGEYRQLHSRLRTHSESIAFYGGETREESHIQQKFKNLVSHMSHVLHDHWWFGMIQDFLLKYLGATVAVILIIEPFFSGHLRPDDSTLGRAEMLSNIRYHTSVIISLFQALGTLSISSRRLNRLSGYADRIHELMAVSRELSGDDKSSFQRNRSRNYLSEANYVEFSDVKVVTPTGNVLVEDLTLRVEQGSNLLITGPNGSGKSSLFRVLGGLWPLVSGHIVKPGVGSDLNKEIFYVPQRPYMAVGTLRDQLIYPLTSGQESELLTEIGMVELLKNVDLEYLLDRYQPEKEVNWGDELSLGEQQRLGMARLFYHKPKFAILDECTSAVTTDMEERFAAKVRAMGTSCITISHRPALVAFHDVVLSLDGEGGWSVHYKRDDSALLTDAEIDSVKSSDTDRQNDAMVVQRAFAAARKESATNSKAQSYQTQLIARSPVVDKSVVLPRFPQPQTSQRALPSRVAAMLNVLIPTIFDKQGAQLLAVACLVVSRTLISDRIASLNGTTVKYVLEQDKAAFVRLIGLSVLQSGASSIIAPSLRHLTQRLALGWRIRLTQHLLRNYLRNNAFYKVFHMSGNSIDADQRLTRDLEKLTADLSGLLTGMVKPSVDILWFTWRMKLLTGQRGVAILYTYMLLGLGFLRRVAPDFGDLAGEEQQLEGKFRFMHERLNTHAESIAFFGGGAREKAMVDKKFRALLDHSLMLLRKKWLYGILDDFVTKQLPNNVTWGLSLLYALEHKGDRALVSTQGELAHALRYLASVVSQSFMAFGDILELHKKFLELSGGINRIFELDEFLDASQSGVTSENQTSRLDSQDLLSFSEVDIITPAQKLMASKLSCEIVSGKSLLVTGPNGSGKTSVFRVLRDIWPTVCGRLTKPSLDIKELGSGNGMFFVPQRPYTCLGTLRDQIIYPLSKEEAEKRAAKLYTSGESSTEAGSILDSHLKTILENVRLVYLLERDVGGWDATTNWEDILSLGEQQRLGMARLFFHRPKFGVLDECTNATSVDVEEQLYRVARDMGVTFITSSQRPALIPFHSLELRLIDGEGNWELRSIEQTTE.

4 consecutive transmembrane segments (helical) span residues 24-44, 142-162, 247-267, and 342-362; these read ILLA…KSRV, APLF…LSTL, YASP…GTAI, and FLLK…PFFS. The ABC transmembrane type-1 1 domain occupies 117–395; the sequence is VFRTALSNRL…SVIISLFQAL (279 aa). In terms of domain architecture, ABC transporter 1 spans 448–695; sequence VEFSDVKVVT…DAMVVQRAFA (248 aa). Residue 481–488 participates in ATP binding; sequence GPNGSGKS. The region spanning 751 to 1049 is the ABC transmembrane type-1 2 domain; the sequence is LIPTIFDKQG…VVSQSFMAFG (299 aa). The helical transmembrane segment at 900-920 threads the bilayer; the sequence is LLTGQRGVAILYTYMLLGLGF. Positions 1091–1337 constitute an ABC transporter 2 domain; sequence LDSQDLLSFS…ELRSIEQTTE (247 aa). An ATP-binding site is contributed by 1130–1137; sequence GPNGSGKT.

Belongs to the ABC transporter superfamily. ABCD family. Peroxisomal fatty acyl CoA transporter (TC 3.A.1.203) subfamily.

Its subcellular location is the peroxisome membrane. The protein resides in the glyoxysome membrane. It carries out the reaction an acyl-CoA(out) + ATP + H2O = an acyl-CoA(in) + ADP + phosphate + H(+). Its function is as follows. Contributes to the transport of fatty acids and their derivatives (acyl CoAs) across the peroxisomal membrane. Provides acetate to the glyoxylate cycle in developing seedlings. Involved in pollen tube elongation, ovule fertilization, and seeds germination after imbibition (controls the switch between the opposing developmental programs of dormancy and germination), probably by promoting beta-oxidation of storage lipids during gluconeogenesis. Required for biosynthesis of jasmonic acid and conversion of indole butyric acid to indole acetic acid. Confers sensitivity to monofluoroacetic acid (FAc), a toxic acetate analog, and to 2,4-dichlorophenoxybutyric acid (2,4-DB) and indole-3-butyric acid (IBA), two precursors of auxin after beta-oxidation. This chain is ABC transporter D family member 1, found in Arabidopsis thaliana (Mouse-ear cress).